The sequence spans 468 residues: GDNF family receptor alpha-1 (468 aa).

An N-terminal signal peptide occupies residues 1 to 24; that stretch reads MFLATLYFALPLLDLLMSAEVSGG. Tandem repeats lie at residues 25–113, 150–238, and 239–342. A disulfide bond links C36 and C42. N59 carries an N-linked (GlcNAc...) asparagine glycan. Intrachain disulfides connect C154–C214, C161–C167, C178–C192, C187–C233, C216–C221, C243–C313, C250–C256, C267–C285, C277–C337, and C315–C325. Residues N347 and N406 are each glycosylated (N-linked (GlcNAc...) asparagine). Residue S430 is the site of GPI-anchor amidated serine attachment. The propeptide at 431–468 is removed in mature form; that stretch reads HITTKSMAAPPSCSLSSLPVLMLTALAALLSVSLAETS.

It belongs to the GDNFR family. In terms of assembly, interacts with GDNF ligand and RET: forms a 2:2:2 ternary complex composed of GDNF ligand, GFRA1 and RET receptor. Interacts with SORL1, either alone or in complex with GDNF. Interaction between SORL1 and GFRA1 leads to GFRA1 internalization, but not degradation. As to expression, expressed in liver, brain, kidney and cochlea.

Its subcellular location is the cell membrane. The protein resides in the golgi apparatus. It localises to the trans-Golgi network. The protein localises to the endosome. It is found in the multivesicular body. Its function is as follows. Coreceptor for GDNF, a neurotrophic factor that enhances survival and morphological differentiation of dopaminergic neurons and increases their high-affinity dopamine uptake. GDNF-binding leads to autophosphorylation and activation of the RET receptor. In Rattus norvegicus (Rat), this protein is GDNF family receptor alpha-1 (Gfra1).